We begin with the raw amino-acid sequence, 525 residues long: MVVYNTLTRRKEVFQPLAAGGSQSVSVGNSQGSAAPVAEEKPLVRMYVCGVTVYDLCHLGHARTYVVWDMVRRYLEWRGYRVKYVQNFTDVDDKILKRALERGESMQAVAERFIAEYFRDMDCLNIKRADFYPRATQSLQAMFQLIQSLELKGFAYRVRDPIRHQTDQSSLLQAGHQPETPASVQYSVYYSVRKFPDYGQLSGRKLEEMEAGASGRVGEEGAEKQDPFDFALWKAAPPSEPGFASPWGWGRPGWHIECSAMVRETLGDHIDIHAGGADLIFPHHENELAQSEPITGKPMAKYWMHNGFLNINGEKMSKSLGNFTTLRQALAVYHPMALRLFLLQTHYRSPIDLTEAAMQAASRGWETLQKGIHCAQHFCKEEKGSPDAEAMQAFQAAMDNDFGTPEALAIAFELAKELTREHNLFTHQGQTHLEPQALKQKSAALLEILATLGFCWPSFSEFEGSKEAATNGELNFKKIEELIAQRSAARKAKNFSEADRIRDQLKALGITLIDQKDGTTRWLRE.

C49 is a Zn(2+) binding site. The short motif at V51–H61 is the 'HIGH' region element. Positions 258, 283, and 287 each coordinate Zn(2+). The short motif at K315–S319 is the 'KMSKS' region element. Position 318 (K318) interacts with ATP.

Belongs to the class-I aminoacyl-tRNA synthetase family. As to quaternary structure, monomer. Requires Zn(2+) as cofactor.

Its subcellular location is the cytoplasm. It catalyses the reaction tRNA(Cys) + L-cysteine + ATP = L-cysteinyl-tRNA(Cys) + AMP + diphosphate. The polypeptide is Cysteine--tRNA ligase (Synechococcus sp. (strain JA-2-3B'a(2-13)) (Cyanobacteria bacterium Yellowstone B-Prime)).